Reading from the N-terminus, the 472-residue chain is Ras-GEF domain-containing family member 1B (472 aa).

Residues 34–164 form the N-terminal Ras-GEF domain; that stretch reads HDNNLLSGSL…MIQCLIRKLA (131 aa). One can recognise a Ras-GEF domain in the interval 204–452; sequence DPYTLAQQLT…YLASYESEGP (249 aa).

Interacts with CCDC124 during cytokinesis. Interacts with Ras family proteins.

It localises to the early endosome. It is found in the late endosome. The protein localises to the midbody. Its function is as follows. Guanine nucleotide exchange factor (GEF) with specificity for RAP2A, it doesn't seems to activate other Ras family proteins (in vitro). The polypeptide is Ras-GEF domain-containing family member 1B (RASGEF1B) (Bos taurus (Bovine)).